The primary structure comprises 87 residues: Hemocyanin alpha chain (87 aa).

This sequence belongs to the tyrosinase family. Hemocyanin subfamily. In terms of assembly, polymer that contains six different types of chains (alpha, beta, gamma, delta, epsilon, and zeta). As to expression, hemolymph.

It is found in the secreted. Its subcellular location is the extracellular space. Functionally, hemocyanins are copper-containing oxygen carriers occurring freely dissolved in the hemolymph of many mollusks and arthropods. The polypeptide is Hemocyanin alpha chain (Tachypleus tridentatus (Japanese horseshoe crab)).